A 116-amino-acid polypeptide reads, in one-letter code: Protein Rev (116 aa).

Phosphoserine; by host CK2 occurs at positions 5 and 8. Residues 18–26 (IIKHLYQSN) form a homomultimerization region. A disordered region spans residues 20-48 (KHLYQSNPPPKPEGTRQARRNRRRRWRER). The short motif at 34–50 (TRQARRNRRRRWRERQR) is the Nuclear localization signal and RNA-binding (RRE) element. The span at 36 to 48 (QARRNRRRRWRER) shows a compositional bias: basic residues. A Nuclear export signal and binding to XPO1 motif is present at residues 73-84 (LQLPPLERLTLD). The tract at residues 91-116 (TSGTQGVGSPQILVESPAVLESGTKE) is disordered. Ser-92 and Ser-99 each carry phosphoserine; by host.

Belongs to the HIV-1 REV protein family. As to quaternary structure, homomultimer; when bound to the RRE. Multimeric assembly is essential for activity and may involve XPO1. Binds to human KPNB1, XPO1, TNPO1, RANBP5 and IPO7. Interacts with the viral Integrase. Interacts with human KHDRBS1. Interacts with human NAP1; this interaction decreases Rev multimerization and stimulates its activity. Interacts with human DEAD-box helicases DDX3 and DDX24; these interactions may serve for viral RNA export to the cytoplasm and packaging, respectively. Interacts with human PSIP1; this interaction may inhibit HIV-1 DNA integration by promoting dissociation of the Integrase-LEDGF/p75 complex. In terms of processing, asymmetrically arginine dimethylated at one site by host PRMT6. Methylation impairs the RNA-binding activity and export of viral RNA from the nucleus to the cytoplasm. Post-translationally, phosphorylated by protein kinase CK2. Presence of, and maybe binding to the N-terminus of the regulatory beta subunit of CK2 is necessary for CK2-mediated Rev's phosphorylation.

It is found in the host nucleus. The protein localises to the host nucleolus. Its subcellular location is the host cytoplasm. Functionally, escorts unspliced or incompletely spliced viral pre-mRNAs (late transcripts) out of the nucleus of infected cells. These pre-mRNAs carry a recognition sequence called Rev responsive element (RRE) located in the env gene, that is not present in fully spliced viral mRNAs (early transcripts). This function is essential since most viral proteins are translated from unspliced or partially spliced pre-mRNAs which cannot exit the nucleus by the pathway used by fully processed cellular mRNAs. Rev itself is translated from a fully spliced mRNA that readily exits the nucleus. Rev's nuclear localization signal (NLS) binds directly to KPNB1/Importin beta-1 without previous binding to KPNA1/Importin alpha-1. KPNB1 binds to the GDP bound form of RAN (Ran-GDP) and targets Rev to the nucleus. In the nucleus, the conversion from Ran-GDP to Ran-GTP dissociates Rev from KPNB1 and allows Rev's binding to the RRE in viral pre-mRNAs. Rev multimerization on the RRE via cooperative assembly exposes its nuclear export signal (NES) to the surface. Rev can then form a complex with XPO1/CRM1 and Ran-GTP, leading to nuclear export of the complex. Conversion from Ran-GTP to Ran-GDP mediates dissociation of the Rev/RRE/XPO1/RAN complex, so that Rev can return to the nucleus for a subsequent round of export. Beside KPNB1, also seems to interact with TNPO1/Transportin-1, RANBP5/IPO5 and IPO7/RANBP7 for nuclear import. The nucleoporin-like HRB/RIP is an essential cofactor that probably indirectly interacts with Rev to release HIV RNAs from the perinuclear region to the cytoplasm. In Human immunodeficiency virus type 1 group M subtype B (isolate CDC-451) (HIV-1), this protein is Protein Rev.